Here is a 295-residue protein sequence, read N- to C-terminus: N-acetylmuramic acid 6-phosphate etherase (295 aa).

Residues 55–218 enclose the SIS domain; the sequence is AADALKQGGR…STGAMVKLGK (164 aa). Residue Glu-83 is the Proton donor of the active site. Glu-114 is a catalytic residue.

It belongs to the GCKR-like family. MurNAc-6-P etherase subfamily. Homodimer.

The enzyme catalyses N-acetyl-D-muramate 6-phosphate + H2O = N-acetyl-D-glucosamine 6-phosphate + (R)-lactate. It functions in the pathway amino-sugar metabolism; 1,6-anhydro-N-acetylmuramate degradation. The protein operates within amino-sugar metabolism; N-acetylmuramate degradation. Its pathway is cell wall biogenesis; peptidoglycan recycling. Specifically catalyzes the cleavage of the D-lactyl ether substituent of MurNAc 6-phosphate, producing GlcNAc 6-phosphate and D-lactate. Together with AnmK, is also required for the utilization of anhydro-N-acetylmuramic acid (anhMurNAc) either imported from the medium or derived from its own cell wall murein, and thus plays a role in cell wall recycling. The chain is N-acetylmuramic acid 6-phosphate etherase from Yersinia pseudotuberculosis serotype O:1b (strain IP 31758).